We begin with the raw amino-acid sequence, 377 residues long: Required for respiratory growth protein 1, mitochondrial (377 aa).

Belongs to the RRG1 family.

The protein localises to the mitochondrion. Essential for respiratory growth and required for mitochondrial protein synthesis. Required for vacuolar acidification. This is Required for respiratory growth protein 1, mitochondrial (RRG1) from Candida glabrata (strain ATCC 2001 / BCRC 20586 / JCM 3761 / NBRC 0622 / NRRL Y-65 / CBS 138) (Yeast).